Here is a 307-residue protein sequence, read N- to C-terminus: HPr kinase/phosphorylase (307 aa).

Catalysis depends on residues histidine 136 and lysine 157. 151–158 (GESGIGKS) lines the ATP pocket. Serine 158 contacts Mg(2+). Aspartate 175 functions as the Proton acceptor; for phosphorylation activity. Proton donor; for dephosphorylation activity in the catalytic mechanism. The tract at residues 198 to 207 (LEVRGMGIID) is important for the catalytic mechanism of both phosphorylation and dephosphorylation. A Mg(2+)-binding site is contributed by glutamate 199. Arginine 240 is an active-site residue. The segment at 261-266 (PIRPGR) is important for the catalytic mechanism of dephosphorylation.

It belongs to the HPrK/P family. As to quaternary structure, homohexamer. It depends on Mg(2+) as a cofactor.

It catalyses the reaction [HPr protein]-L-serine + ATP = [HPr protein]-O-phospho-L-serine + ADP + H(+). The catalysed reaction is [HPr protein]-O-phospho-L-serine + phosphate + H(+) = [HPr protein]-L-serine + diphosphate. Catalyzes the ATP- as well as the pyrophosphate-dependent phosphorylation of a specific serine residue in HPr, a phosphocarrier protein of the phosphoenolpyruvate-dependent sugar phosphotransferase system (PTS). HprK/P also catalyzes the pyrophosphate-producing, inorganic phosphate-dependent dephosphorylation (phosphorolysis) of seryl-phosphorylated HPr (P-Ser-HPr). The two antagonistic activities of HprK/P are regulated by several intracellular metabolites, which change their concentration in response to the absence or presence of rapidly metabolisable carbon sources (glucose, fructose, etc.) in the growth medium. Therefore, by controlling the phosphorylation state of HPr, HPrK/P is a sensor enzyme that plays a major role in the regulation of carbon metabolism and sugar transport: it mediates carbon catabolite repression (CCR), and regulates PTS-catalyzed carbohydrate uptake and inducer exclusion. The protein is HPr kinase/phosphorylase of Clostridium perfringens (strain ATCC 13124 / DSM 756 / JCM 1290 / NCIMB 6125 / NCTC 8237 / Type A).